Here is a 476-residue protein sequence, read N- to C-terminus: Calcium/calmodulin-dependent protein kinase type 1G (476 aa).

Residues 23–277 form the Protein kinase domain; that stretch reads FIFMEVLGSG…CEKALSHPWI (255 aa). ATP-binding positions include 29–37 and Lys52; that span reads LGSGAFSEV. The active-site Proton acceptor is the Asp143. Residues 277-317 are autoinhibitory domain; the sequence is IDGNTALHRDIYPSVSLQIQKNFAKSKWRQAFNAAAVVHHM. Residues 297–318 are calmodulin-binding; the sequence is KNFAKSKWRQAFNAAAVVHHMR. Residues 325-352 are disordered; it reads HSPGVRPEVENRPPETQASETSRPSSPE. Positions 338–352 are enriched in polar residues; it reads PETQASETSRPSSPE.

Belongs to the protein kinase superfamily. CAMK Ser/Thr protein kinase family. CaMK subfamily. Post-translationally, may be prenylated on Cys-473. As to expression, mainly expressed in brain with small amounts in skeletal muscles, kidney, spleen and liver. Strongly expressed in forebrain neocortex, striatum and limbic system.

The protein resides in the cytoplasm. The protein localises to the golgi apparatus membrane. It is found in the cell membrane. It catalyses the reaction L-seryl-[protein] + ATP = O-phospho-L-seryl-[protein] + ADP + H(+). The enzyme catalyses L-threonyl-[protein] + ATP = O-phospho-L-threonyl-[protein] + ADP + H(+). Activated by Ca(2+)/calmodulin. Binding of calmodulin is thought to result in a conformational change and leads to activation through phosphorylation by CAMKK1. Calcium/calmodulin-dependent protein kinase belonging to a proposed calcium-triggered signaling cascade. In vitro phosphorylates transcription factor CREB1. The chain is Calcium/calmodulin-dependent protein kinase type 1G (CAMK1G) from Homo sapiens (Human).